Here is a 734-residue protein sequence, read N- to C-terminus: Photosystem I P700 chlorophyll a apoprotein A2 (734 aa).

A run of 8 helical transmembrane segments spans residues Ile-46–Ala-69, Leu-135–Gln-158, Leu-175–Ile-199, Met-273–Tyr-291, Leu-330–Tyr-353, Ala-369–Val-395, Ala-417–His-439, and Phe-517–Val-535. Residues Cys-559 and Cys-568 each coordinate [4Fe-4S] cluster. The next 2 helical transmembrane spans lie at Ala-575–Trp-596 and Leu-643–Ile-665. His-654, Met-662, and Tyr-670 together coordinate chlorophyll a. Trp-671 contributes to the phylloquinone binding site. A helical transmembrane segment spans residues Leu-707–Ala-727.

It belongs to the PsaA/PsaB family. As to quaternary structure, the PsaA/B heterodimer binds the P700 chlorophyll special pair and subsequent electron acceptors. PSI consists of a core antenna complex that captures photons, and an electron transfer chain that converts photonic excitation into a charge separation. The eukaryotic PSI reaction center is composed of at least 11 subunits. P700 is a chlorophyll a/chlorophyll a' dimer, A0 is one or more chlorophyll a, A1 is one or both phylloquinones and FX is a shared 4Fe-4S iron-sulfur center. serves as cofactor.

It is found in the plastid. The protein localises to the chloroplast thylakoid membrane. It carries out the reaction reduced [plastocyanin] + hnu + oxidized [2Fe-2S]-[ferredoxin] = oxidized [plastocyanin] + reduced [2Fe-2S]-[ferredoxin]. In terms of biological role, psaA and PsaB bind P700, the primary electron donor of photosystem I (PSI), as well as the electron acceptors A0, A1 and FX. PSI is a plastocyanin/cytochrome c6-ferredoxin oxidoreductase, converting photonic excitation into a charge separation, which transfers an electron from the donor P700 chlorophyll pair to the spectroscopically characterized acceptors A0, A1, FX, FA and FB in turn. Oxidized P700 is reduced on the lumenal side of the thylakoid membrane by plastocyanin or cytochrome c6. The sequence is that of Photosystem I P700 chlorophyll a apoprotein A2 from Chlorella vulgaris (Green alga).